Consider the following 214-residue polypeptide: ATP phosphoribosyltransferase (214 aa).

This sequence belongs to the ATP phosphoribosyltransferase family. Short subfamily. In terms of assembly, heteromultimer composed of HisG and HisZ subunits.

Its subcellular location is the cytoplasm. The enzyme catalyses 1-(5-phospho-beta-D-ribosyl)-ATP + diphosphate = 5-phospho-alpha-D-ribose 1-diphosphate + ATP. Its pathway is amino-acid biosynthesis; L-histidine biosynthesis; L-histidine from 5-phospho-alpha-D-ribose 1-diphosphate: step 1/9. In terms of biological role, catalyzes the condensation of ATP and 5-phosphoribose 1-diphosphate to form N'-(5'-phosphoribosyl)-ATP (PR-ATP). Has a crucial role in the pathway because the rate of histidine biosynthesis seems to be controlled primarily by regulation of HisG enzymatic activity. The protein is ATP phosphoribosyltransferase of Ruminiclostridium cellulolyticum (strain ATCC 35319 / DSM 5812 / JCM 6584 / H10) (Clostridium cellulolyticum).